The chain runs to 271 residues: Calretinin (271 aa).

6 EF-hand domains span residues Leu-16–Ala-51, Asn-63–Phe-98, Gly-107–Lys-142, Lys-151–Phe-186, Leu-195–Lys-230, and Met-235–Pro-270. Ca(2+)-binding residues include Asp-29, Asp-31, Asn-33, Tyr-35, Glu-40, Asp-76, Asn-78, Asp-80, Lys-82, Glu-87, Asp-120, Asp-122, Ser-124, Tyr-126, Glu-131, Asp-164, Asn-166, Asp-168, Lys-170, Glu-175, Asp-208, Asp-210, Ser-212, Tyr-214, and Glu-219. A Phosphotyrosine modification is found at Tyr-214.

The protein belongs to the calbindin family. In terms of tissue distribution, brain.

It is found in the synapse. The protein localises to the cell projection. It localises to the dendrite. In terms of biological role, calcium-binding protein involved in calcium homeostasis and signal transduction. It plays a critical role in buffering intracellular calcium levels and modulating calcium-dependent signaling pathways. Predominantly expressed in specific neuronal populations, influences synaptic plasticity and neuronal excitability, contributing to learning and memory. During embryonic development, it facilitates neuronal differentiation and maturation. In Homo sapiens (Human), this protein is Calretinin.